We begin with the raw amino-acid sequence, 630 residues long: 1,4-alpha-glucan branching enzyme GlgB (630 aa).

D311 serves as the catalytic Nucleophile. E362 (proton donor) is an active-site residue.

The protein belongs to the glycosyl hydrolase 13 family. GlgB subfamily. In terms of assembly, monomer.

It catalyses the reaction Transfers a segment of a (1-&gt;4)-alpha-D-glucan chain to a primary hydroxy group in a similar glucan chain.. The protein operates within glycan biosynthesis; glycogen biosynthesis. Catalyzes the formation of the alpha-1,6-glucosidic linkages in glycogen by scission of a 1,4-alpha-linked oligosaccharide from growing alpha-1,4-glucan chains and the subsequent attachment of the oligosaccharide to the alpha-1,6 position. The sequence is that of 1,4-alpha-glucan branching enzyme GlgB from Aquifex aeolicus (strain VF5).